The chain runs to 180 residues: NAD(P)H-quinone oxidoreductase subunit I, chloroplastic (180 aa).

4Fe-4S ferredoxin-type domains are found at residues 55–84 (GRIH…VDWK) and 95–124 (LNYS…MTEE). Positions 64, 67, 70, 74, 104, 107, 110, and 114 each coordinate [4Fe-4S] cluster.

This sequence belongs to the complex I 23 kDa subunit family. As to quaternary structure, NDH is composed of at least 16 different subunits, 5 of which are encoded in the nucleus. [4Fe-4S] cluster serves as cofactor.

Its subcellular location is the plastid. It localises to the chloroplast thylakoid membrane. It carries out the reaction a plastoquinone + NADH + (n+1) H(+)(in) = a plastoquinol + NAD(+) + n H(+)(out). The enzyme catalyses a plastoquinone + NADPH + (n+1) H(+)(in) = a plastoquinol + NADP(+) + n H(+)(out). NDH shuttles electrons from NAD(P)H:plastoquinone, via FMN and iron-sulfur (Fe-S) centers, to quinones in the photosynthetic chain and possibly in a chloroplast respiratory chain. The immediate electron acceptor for the enzyme in this species is believed to be plastoquinone. Couples the redox reaction to proton translocation, and thus conserves the redox energy in a proton gradient. The polypeptide is NAD(P)H-quinone oxidoreductase subunit I, chloroplastic (Ranunculus macranthus (Large buttercup)).